Reading from the N-terminus, the 336-residue chain is Anthranilate phosphoribosyltransferase (336 aa).

Residues G79, 82-83 (GD), T87, 89-92 (NISS), 107-115 (KHGNRSVSS), and S119 contribute to the 5-phospho-alpha-D-ribose 1-diphosphate site. G79 is an anthranilate binding site. S91 provides a ligand contact to Mg(2+). N110 provides a ligand contact to anthranilate. Anthranilate is bound at residue R165. The Mg(2+) site is built by D223 and E224.

This sequence belongs to the anthranilate phosphoribosyltransferase family. Homodimer. It depends on Mg(2+) as a cofactor.

It catalyses the reaction N-(5-phospho-beta-D-ribosyl)anthranilate + diphosphate = 5-phospho-alpha-D-ribose 1-diphosphate + anthranilate. It participates in amino-acid biosynthesis; L-tryptophan biosynthesis; L-tryptophan from chorismate: step 2/5. Its function is as follows. Catalyzes the transfer of the phosphoribosyl group of 5-phosphorylribose-1-pyrophosphate (PRPP) to anthranilate to yield N-(5'-phosphoribosyl)-anthranilate (PRA). In Tolumonas auensis (strain DSM 9187 / NBRC 110442 / TA 4), this protein is Anthranilate phosphoribosyltransferase.